Here is a 162-residue protein sequence, read N- to C-terminus: MERTIDPLTLPYRPCVGIVLINREGLIFAGQRIDSPVPAWQMPQGGIDEGEKPREAALRELWEETGIPAERVEFVAKAPDWVTYDLPPELLGRVWGGKYRGQRQKWFLYRYLGTDEEVGIGTDHAEFSCWRWIGAEEMVAAIVPFKRAVYEEVVATFRPHLA.

A Nudix hydrolase domain is found at 11–155; it reads PYRPCVGIVL…KRAVYEEVVA (145 aa). The short motif at 45–66 is the Nudix box element; that stretch reads GGIDEGEKPREAALRELWEETG.

This sequence belongs to the Nudix hydrolase family. RppH subfamily. A divalent metal cation serves as cofactor.

Its function is as follows. Accelerates the degradation of transcripts by removing pyrophosphate from the 5'-end of triphosphorylated RNA, leading to a more labile monophosphorylated state that can stimulate subsequent ribonuclease cleavage. The polypeptide is RNA pyrophosphohydrolase (Cereibacter sphaeroides (strain ATCC 17023 / DSM 158 / JCM 6121 / CCUG 31486 / LMG 2827 / NBRC 12203 / NCIMB 8253 / ATH 2.4.1.) (Rhodobacter sphaeroides)).